Consider the following 834-residue polypeptide: Translation initiation factor IF-2 (834 aa).

Residues 1–247 form a disordered region; that stretch reads MTEEKKFSGS…STPATVRKEQ (247 aa). The span at 45–101 shows a compositional bias: low complexity; the sequence is GGSRPSRPARPNNNNQNRPNNGGQSQNRNNQNRSNTSTGGQNRSNNGGNRNNRPGSR. The segment covering 109–125 has biased composition (basic and acidic residues); sequence PMIREKKNWSTKPREGQ. Composition is skewed to low complexity over residues 149 to 165 and 173 to 201; these read ASAA…ATKP and ATKP…SARN. A compositionally biased stretch (basic residues) spans 224-233; it reads GSKKSRRIAA. The tr-type G domain occupies 335–504; sequence SRPPVVTIMG…LLQAEVLELK (170 aa). Residues 344-351 form a G1 region; sequence GHVDHGKT. 344–351 serves as a coordination point for GTP; that stretch reads GHVDHGKT. The tract at residues 369–373 is G2; it reads GITQH. Residues 390–393 are G3; it reads DTPG. Residues 390–394 and 444–447 contribute to the GTP site; these read DTPGH and NKID. The tract at residues 444 to 447 is G4; the sequence is NKID. Residues 480–482 form a G5 region; the sequence is SAK.

Belongs to the TRAFAC class translation factor GTPase superfamily. Classic translation factor GTPase family. IF-2 subfamily.

The protein localises to the cytoplasm. Its function is as follows. One of the essential components for the initiation of protein synthesis. Protects formylmethionyl-tRNA from spontaneous hydrolysis and promotes its binding to the 30S ribosomal subunits. Also involved in the hydrolysis of GTP during the formation of the 70S ribosomal complex. This chain is Translation initiation factor IF-2, found in Leuconostoc mesenteroides subsp. mesenteroides (strain ATCC 8293 / DSM 20343 / BCRC 11652 / CCM 1803 / JCM 6124 / NCDO 523 / NBRC 100496 / NCIMB 8023 / NCTC 12954 / NRRL B-1118 / 37Y).